The sequence spans 759 residues: Forkhead box protein M1 (759 aa).

The interval 1 to 92 (MRTSPRRPLI…MRLPSNPPQS (92 aa)) is disordered. A compositionally biased stretch (basic and acidic residues) spans 48-63 (LAHELEDMAPKSKADQ). The fork-head DNA-binding region spans 260–358 (RPPYSYMALI…KTASPMSPAD (99 aa)). Disordered stretches follow at residues 420-450 (AESS…KHLG), 516-535 (SANP…PSNV), and 596-631 (KEHF…RDPV). Residues 601-612 (KPTTSSTPSKPT) are compositionally biased toward low complexity.

As to expression, localized to the animal hemisphere of early cleavage stage embryos. During neurulation, expressed in the neural folds. Later, expressed in the spinal cord and in the eye field. During tailbud stages, expression is still restricted to the neuroectoderm, predominantly to the hindbrain, the eye and the spinal cord. With ongoing development, expression is also found at lower levels in the branchial arches. At stage 35, expressed in the rhombencephalon and in the eye retina.

It localises to the nucleus. Transcription factor regulating the expression of cell cycle genes essential for DNA replication and mitosis. Plays a role in the control of cell proliferation. Also plays a role in DNA break repair, participating in the DNA damage checkpoint response. Promotes transcription of PHB2. The polypeptide is Forkhead box protein M1 (Xenopus laevis (African clawed frog)).